The primary structure comprises 219 residues: Ribonuclease HII (219 aa).

In terms of domain architecture, RNase H type-2 spans R30–S219. Residues D36, E37, and D128 each contribute to the a divalent metal cation site.

This sequence belongs to the RNase HII family. Mn(2+) serves as cofactor. Requires Mg(2+) as cofactor.

Its subcellular location is the cytoplasm. The enzyme catalyses Endonucleolytic cleavage to 5'-phosphomonoester.. In terms of biological role, endonuclease that specifically degrades the RNA of RNA-DNA hybrids. The sequence is that of Ribonuclease HII from Pelobacter propionicus (strain DSM 2379 / NBRC 103807 / OttBd1).